Consider the following 358-residue polypeptide: MFDQLDIVEERYEQLNELLSDPDVVNDADKLRKYSKEQADLQKTVDVYRSYKTKKEELQDIEDMLNETSDKEEVEMLKEESSALKTELPDMEEELKILLIPKDPNDDKDVIVEIRAAAGGDEAAIFAGDLMRMYSKYAEANGFKTEIVEASESDHGGYKEVSFSVSGTGAYSKLKFENGAHRVQRVPETESGGRIHTSTATVAVLPEAEDVEIEIRNEDLKIDTYRSSGAGGQHVNTTDSAVRITHLPTGVIATSSEKSQIQNREKAMKVLKARLYDMKLQEEQQKYASQRKSAVGTGDRSERIRTYNYPQSRVTDHRIGLTLQKLNQIMEGNLDEIVEALTLSEQTEKLKELNNGEL.

Glutamine 233 carries the N5-methylglutamine modification.

This sequence belongs to the prokaryotic/mitochondrial release factor family. Post-translationally, methylated by PrmC. Methylation increases the termination efficiency of RF1.

Its subcellular location is the cytoplasm. Functionally, peptide chain release factor 1 directs the termination of translation in response to the peptide chain termination codons UAG and UAA. The chain is Peptide chain release factor 1 from Staphylococcus epidermidis (strain ATCC 35984 / DSM 28319 / BCRC 17069 / CCUG 31568 / BM 3577 / RP62A).